We begin with the raw amino-acid sequence, 536 residues long: Sensory rhodopsin I transducer (536 aa).

Residues 2–14 (TIAWARRRYGVKL) are Cytoplasmic-facing. The chain crosses the membrane as a helical span at residues 15–29 (GLGYIATAGLLVGVG). At 30-39 (VTTNDVPSTI) the chain is on the extracellular side. Residues 40–55 (VAGIAGLLTLGSINAA) traverse the membrane as a helical segment. One can recognise an HAMP 1 domain in the interval 55–107 (AETVASIKEIAAQTERVANGNLEQEVTSTRTDEFGSLADSIEQMRQSLRGRLN). The Cytoplasmic portion of the chain corresponds to 56-536 (ETVASIKEIA…MRAGADGGGA (481 aa)). Residues 116–145 (LEETQAEAETAREEAEQAKQEAQAAEREAR) are disordered. A compositionally biased stretch (basic and acidic residues) spans 124–145 (ETAREEAEQAKQEAQAAEREAR). The region spanning 149 to 202 (ATYQDTAKRYGETMEAAATGDLTQRVDVDTDHEAMETVGTAFNQMMDDLQATVR) is the HAMP 2 domain. In terms of domain architecture, Methyl-accepting transducer spans 221 to 459 (TSADIEASAG…STATSVERVA (239 aa)). Glu-266 is modified (glutamate methyl ester (Glu)). A disordered region spans residues 278–307 (SEDVATASDAARDSSKSALDEMSSIETEVD). The span at 287–296 (AARDSSKSAL) shows a compositional bias: basic and acidic residues. The residue at position 473 (Glu-473) is a Glutamate methyl ester (Glu). The interval 512 to 536 (TEDSETAGGSVEQPVMRAGADGGGA) is disordered.

This sequence belongs to the methyl-accepting chemotaxis (MCP) protein family. Post-translationally, methylated by CheR.

The protein localises to the cell membrane. Its function is as follows. Transduces signals from the phototaxis receptor sensory rhodopsin I (SR-I) to the flagellar motor. Responds to light changes through the variation of the level of methylation. This Halobacterium salinarum (strain ATCC 29341 / DSM 671 / R1) protein is Sensory rhodopsin I transducer (htr1).